The sequence spans 277 residues: Inhibition of morphological differentiation protein (277 aa).

Mg(2+) is bound by residues Asp18, Asp20, and Asp192.

It belongs to the HAD-like hydrolase superfamily. SerB family.

The sequence is that of Inhibition of morphological differentiation protein from Streptomyces azureus.